The chain runs to 446 residues: tRNA-2-methylthio-N(6)-dimethylallyladenosine synthase (446 aa).

The 117-residue stretch at 5–121 (KYLYVETFGC…LPEIVRAAER (117 aa)) folds into the MTTase N-terminal domain. The [4Fe-4S] cluster site is built by C14, C50, C84, C159, C163, and C166. The Radical SAM core domain maps to 145–375 (GEGGVTRFVT…QTLQQQMKRE (231 aa)). Residues 378–440 (ISFVGTRQLV…QNSLLGEIVT (63 aa)) form the TRAM domain.

Belongs to the methylthiotransferase family. MiaB subfamily. In terms of assembly, monomer. The cofactor is [4Fe-4S] cluster.

Its subcellular location is the cytoplasm. The enzyme catalyses N(6)-dimethylallyladenosine(37) in tRNA + (sulfur carrier)-SH + AH2 + 2 S-adenosyl-L-methionine = 2-methylsulfanyl-N(6)-dimethylallyladenosine(37) in tRNA + (sulfur carrier)-H + 5'-deoxyadenosine + L-methionine + A + S-adenosyl-L-homocysteine + 2 H(+). In terms of biological role, catalyzes the methylthiolation of N6-(dimethylallyl)adenosine (i(6)A), leading to the formation of 2-methylthio-N6-(dimethylallyl)adenosine (ms(2)i(6)A) at position 37 in tRNAs that read codons beginning with uridine. This chain is tRNA-2-methylthio-N(6)-dimethylallyladenosine synthase, found in Geobacter sulfurreducens (strain ATCC 51573 / DSM 12127 / PCA).